The chain runs to 248 residues: ATP synthase subunit a, chloroplastic (248 aa).

The next 5 membrane-spanning stretches (helical) occupy residues 37–57 (AQVL…AVLA), 96–116 (VPFI…GALF), 135–155 (INTT…AGLH), 200–220 (LVVA…MMFL), and 221–241 (GLFT…AYIG).

Belongs to the ATPase A chain family. As to quaternary structure, F-type ATPases have 2 components, CF(1) - the catalytic core - and CF(0) - the membrane proton channel. CF(1) has five subunits: alpha(3), beta(3), gamma(1), delta(1), epsilon(1). CF(0) has four main subunits: a, b, b' and c.

It localises to the plastid. Its subcellular location is the chloroplast thylakoid membrane. Key component of the proton channel; it plays a direct role in the translocation of protons across the membrane. The polypeptide is ATP synthase subunit a, chloroplastic (Marchantia polymorpha (Common liverwort)).